The chain runs to 553 residues: ATP synthase F(1) complex subunit alpha, mitochondrial (553 aa).

A mitochondrion-targeting transit peptide spans Met1–Leu43. Phosphoserine is present on residues Ser53 and Ser65. Ser76 carries the phosphoserine; alternate modification. An O-linked (GlcNAc) serine; alternate glycan is attached at Ser76. Ser106 is subject to Phosphoserine. Lys123, Lys126, and Lys132 each carry N6-acetyllysine. Thr134 is subject to Phosphothreonine. N6-acetyllysine; alternate is present on Lys161. Position 161 is an N6-succinyllysine; alternate (Lys161). Position 166 is a phosphoserine (Ser166). Position 167 is an N6-acetyllysine; alternate (Lys167). Lys167 bears the N6-succinyllysine; alternate mark. Phosphoserine is present on Ser184. Arg204 bears the Omega-N-methylarginine mark. ATP-binding residues include Gln215, Gly217, Lys218, Thr219, and Ser220. A Mg(2+)-binding site is contributed by Thr219. 2 positions are modified to N6-acetyllysine; alternate: Lys230 and Lys239. N6-succinyllysine; alternate occurs at positions 230 and 239. Lys240 is subject to N6-acetyllysine. Residues Lys261 and Lys305 each carry the N6-acetyllysine; alternate modification. Lys261 and Lys305 each carry N6-succinyllysine; alternate. Residue Asp312 coordinates Mg(2+). The residue at position 427 (Lys427) is an N6-acetyllysine; alternate. Lys427 is subject to N6-succinyllysine; alternate. Lys434 bears the N6-acetyllysine mark. Gln473 and Gln475 together coordinate ATP. N6-acetyllysine; alternate occurs at positions 498, 506, 531, and 539. 4 positions are modified to N6-succinyllysine; alternate: Lys498, Lys506, Lys531, and Lys539. The residue at position 541 (Lys541) is an N6-acetyllysine.

This sequence belongs to the ATPase alpha/beta chains family. In terms of assembly, homotrimer. Component of the ATP synthase complex composed at least of ATP5F1A/subunit alpha, ATP5F1B/subunit beta, ATP5MC1/subunit c (homooctomer), MT-ATP6/subunit a, MT-ATP8/subunit 8, ATP5ME/subunit e, ATP5MF/subunit f, ATP5MG/subunit g, ATP5MK/subunit k, ATP5MJ/subunit j, ATP5F1C/subunit gamma, ATP5F1D/subunit delta, ATP5F1E/subunit epsilon, ATP5PF/subunit F6, ATP5PB/subunit b, ATP5PD/subunit d, ATP5PO/subunit OSCP. ATP synthase complex consists of a soluble F(1) head domain (subunits alpha(3) and beta(3)) - the catalytic core - and a membrane F(0) domain - the membrane proton channel (subunits c, a, 8, e, f, g, k and j). These two domains are linked by a central stalk (subunits gamma, delta, and epsilon) rotating inside the F1 region and a stationary peripheral stalk (subunits F6, b, d, and OSCP). Interacts with ATPAF2. Interacts with HRG; the interaction occurs on the surface of T-cells and alters the cell morphology when associated with concanavalin (in vitro). Interacts with PLG (angiostatin peptide); the interaction inhibits most of the angiogenic properties of angiostatin. Interacts with BLOC1S1. Interacts with BCL2L1 isoform BCL-X(L); the interaction mediates the association of BCL2L1 isoform BCL-X(L) with the mitochondrial membrane F(1)F(0) ATP synthase and enhances neurons metabolic efficiency. Interacts with CLN5 and PPT1. Interacts with S100A1; this interaction increases F1-ATPase activity. Interacts with ABCB7; this interaction allows the regulation of cellular iron homeostasis and cellular reactive oxygen species (ROS) levels in cardiomyocytes. In terms of processing, acetylated on lysine residues. BLOC1S1 is required for acetylation.

It is found in the mitochondrion inner membrane. Its subcellular location is the cell membrane. In terms of biological role, subunit alpha, of the mitochondrial membrane ATP synthase complex (F(1)F(0) ATP synthase or Complex V) that produces ATP from ADP in the presence of a proton gradient across the membrane which is generated by electron transport complexes of the respiratory chain. ATP synthase complex consist of a soluble F(1) head domain - the catalytic core - and a membrane F(1) domain - the membrane proton channel. These two domains are linked by a central stalk rotating inside the F(1) region and a stationary peripheral stalk. During catalysis, ATP synthesis in the catalytic domain of F(1) is coupled via a rotary mechanism of the central stalk subunits to proton translocation. In vivo, can only synthesize ATP although its ATP hydrolase activity can be activated artificially in vitro. With the catalytic subunit beta (ATP5F1B), forms the catalytic core in the F(1) domain. Subunit alpha does not bear the catalytic high-affinity ATP-binding sites. In Pan troglodytes (Chimpanzee), this protein is ATP synthase F(1) complex subunit alpha, mitochondrial.